The sequence spans 126 residues: Large ribosomal subunit protein bL12 (126 aa).

Belongs to the bacterial ribosomal protein bL12 family. As to quaternary structure, homodimer. Part of the ribosomal stalk of the 50S ribosomal subunit. Forms a multimeric L10(L12)X complex, where L10 forms an elongated spine to which 2 to 4 L12 dimers bind in a sequential fashion. Binds GTP-bound translation factors.

Functionally, forms part of the ribosomal stalk which helps the ribosome interact with GTP-bound translation factors. Is thus essential for accurate translation. This chain is Large ribosomal subunit protein bL12, found in Saccharophagus degradans (strain 2-40 / ATCC 43961 / DSM 17024).